A 437-amino-acid chain; its full sequence is Bystin (437 aa).

Residues 1–105 (MPKFKAARGV…DGSDDEDEEW (105 aa)) form a disordered region. The residue at position 40 (Arg-40) is an Omega-N-methylarginine. Phosphoserine is present on Ser-55. Basic and acidic residues predominate over residues 71 to 87 (AEHGTGDKPAAPRERTT). Phosphoserine is present on Ser-98. The residue at position 156 (Thr-156) is a Phosphothreonine. Ser-167 and Ser-414 each carry phosphoserine.

It belongs to the bystin family. Binds trophinin, tastin and cytokeratins. As to expression, found in the placenta from the sixth week of pregnancy. Was localized in the cytoplasm of the syncytiotrophoblast in the chorionic villi and in endometrial decidual cells at the uteroplacental interface. After week 10, the level decreased and then disappeared from placental villi.

The protein resides in the cytoplasm. Its subcellular location is the nucleus. It is found in the nucleolus. Functionally, required for processing of 20S pre-rRNA precursor and biogenesis of 40S ribosomal subunits. May be required for trophinin-dependent regulation of cell adhesion during implantation of human embryos. This chain is Bystin, found in Homo sapiens (Human).